Consider the following 156-residue polypeptide: Small ribosomal subunit protein uS7 (156 aa).

Belongs to the universal ribosomal protein uS7 family. In terms of assembly, part of the 30S ribosomal subunit. Contacts proteins S9 and S11.

Its function is as follows. One of the primary rRNA binding proteins, it binds directly to 16S rRNA where it nucleates assembly of the head domain of the 30S subunit. Is located at the subunit interface close to the decoding center, probably blocks exit of the E-site tRNA. The chain is Small ribosomal subunit protein uS7 from Pasteurella multocida (strain Pm70).